The following is a 257-amino-acid chain: uncharacterized protein (257 aa).

The N-terminal stretch at 1–22 is a signal peptide; it reads MGYLKRFALYISVMILIFAIAG. C23 carries the N-palmitoyl cysteine lipid modification. Residue C23 is the site of S-diacylglycerol cysteine attachment.

This sequence belongs to the staphylococcal tandem lipoprotein family.

The protein resides in the cell membrane. This is an uncharacterized protein from Staphylococcus aureus (strain USA300).